A 347-amino-acid polypeptide reads, in one-letter code: 4-hydroxy-2-oxovalerate aldolase 1 (347 aa).

Residues 13–265 (IRVTDTSLRD…KTGIDFFAIA (253 aa)) enclose the Pyruvate carboxyltransferase domain. 21 to 22 (RD) provides a ligand contact to substrate. D22 provides a ligand contact to Mn(2+). H25 serves as the catalytic Proton acceptor. Positions 175 and 204 each coordinate substrate. Residues H204 and H206 each coordinate Mn(2+). Residue Y295 participates in substrate binding.

The protein belongs to the 4-hydroxy-2-oxovalerate aldolase family.

The catalysed reaction is (S)-4-hydroxy-2-oxopentanoate = acetaldehyde + pyruvate. The protein is 4-hydroxy-2-oxovalerate aldolase 1 of Rhodococcus erythropolis (strain PR4 / NBRC 100887).